The primary structure comprises 699 residues: Glycine--tRNA ligase beta subunit (699 aa).

This sequence belongs to the class-II aminoacyl-tRNA synthetase family. In terms of assembly, tetramer of two alpha and two beta subunits.

The protein resides in the cytoplasm. The enzyme catalyses tRNA(Gly) + glycine + ATP = glycyl-tRNA(Gly) + AMP + diphosphate. This chain is Glycine--tRNA ligase beta subunit, found in Bradyrhizobium diazoefficiens (strain JCM 10833 / BCRC 13528 / IAM 13628 / NBRC 14792 / USDA 110).